A 201-amino-acid polypeptide reads, in one-letter code: uncharacterized protein (201 aa).

May have a role in tissue tropism within the insect larvae. This is an uncharacterized protein from Lepidoptera (butterflies and moths).